The following is a 1269-amino-acid chain: Regulator of nonsense transcripts 2 (1269 aa).

2 disordered regions span residues 1 to 125 and 143 to 162; these read MPAE…EKEE and LRSK…FFSR. Residues 57-133 are a coiled coil; that stretch reads KKRLEEDKRK…EESLQLHQEA (77 aa). Residues 94 to 132 form a sufficient for interaction with UPF1 region; the sequence is KKKQEEEERKKQEEQAKRQQEEAAAQLKEKEESLQLHQE. Residues 168 to 396 enclose the MIF4G 1 domain; it reads KKNTAFVKKL…KGELSEDRHK (229 aa). Disordered stretches follow at residues 422–444 and 487–518; these read NMPD…DIFT and KSQN…DLEL. Basic and acidic residues-rich tracts occupy residues 427 to 438 and 487 to 511; these read PQDKPTPEEHGP and KSQN…KEAS. 2 consecutive MIF4G domains span residues 571–755 and 774–984; these read QQLP…YCNP and RKLL…LRPK. Residues 709–926 are sufficient for interaction with UPF3A and UPF3B; that stretch reads GRFLFRSPES…IRLVCTILDT (218 aa). The sufficient for interaction with EIF4A1 and EIF1 stretch occupies residues 755-1269; the sequence is PPPAEKTVRK…LIFKTGGRRR (515 aa). Residues 837-857 form a binds to UPF3B region; the sequence is EDVGIHVVDGVLEDIRLGMEV. Residues 1017–1090 are disordered; sequence SKDSMTEGEN…KENETDEENA (74 aa). The span at 1025–1073 shows a compositional bias: acidic residues; it reads ENLEEDEEEEEGGAETEEQSGNESEVNEPEEEEGSEEEEEGEEEEEENT. Positions 1081-1269 are sufficient for interaction with UPF1 C-terminus; the sequence is KENETDEENA…LIFKTGGRRR (189 aa). Thr1085 carries the phosphothreonine modification. Interaction with UPF1 stretches follow at residues 1102 to 1126 and 1164 to 1204; these read VPCV…QQRS and DTMP…AEQE. Positions 1102–1195 are necessary for interaction with UPF1; sequence VPCVEDEDFI…PMSSQLAANH (94 aa). The interval 1218–1269 is disordered; it reads ERQEQEDYQEMLQSLAQRPAPANTNRERRPRYQHPKGAPNADLIFKTGGRRR.

In terms of assembly, found in a post-splicing messenger ribonucleoprotein (mRNP) complex. Associates with the exon junction complex (EJC). Interacts with SMG1, EST1A, UPF3A, UPF3B, EIF4A1 and EIF1. Interacts with UPF1; interaction is promoted by TDRD6. Interacts with DDX4. As to expression, localized in male germ cells.

The protein localises to the cytoplasm. It localises to the perinuclear region. In terms of biological role, involved in nonsense-mediated decay (NMD) of mRNAs containing premature stop codons by associating with the nuclear exon junction complex (EJC). Recruited by UPF3B associated with the EJC core at the cytoplasmic side of the nuclear envelope and the subsequent formation of an UPF1-UPF2-UPF3 surveillance complex (including UPF1 bound to release factors at the stalled ribosome) is believed to activate NMD. In cooperation with UPF3B stimulates both ATPase and RNA helicase activities of UPF1. Binds spliced mRNA. The polypeptide is Regulator of nonsense transcripts 2 (Mus musculus (Mouse)).